The sequence spans 839 residues: Probable beta-glucosidase I (839 aa).

Asparagine 197 carries an N-linked (GlcNAc...) asparagine glycan. Aspartate 225 is an active-site residue. One can recognise a PA14 domain in the interval 395-555; it reads DGKTGFSFKV…GQEELISNAV (161 aa). Asparagine 620 carries an N-linked (GlcNAc...) asparagine glycan.

Belongs to the glycosyl hydrolase 3 family.

The protein localises to the secreted. It carries out the reaction Hydrolysis of terminal, non-reducing beta-D-glucosyl residues with release of beta-D-glucose.. The protein operates within glycan metabolism; cellulose degradation. In terms of biological role, beta-glucosidases are one of a number of cellulolytic enzymes involved in the degradation of cellulosic biomass. Catalyzes the last step releasing glucose from the inhibitory cellobiose. The sequence is that of Probable beta-glucosidase I (bglI) from Aspergillus oryzae (strain ATCC 42149 / RIB 40) (Yellow koji mold).